The sequence spans 284 residues: Pantothenate synthetase (284 aa).

ATP is bound at residue 30–37 (MGFLHEGH). The active-site Proton donor is the His37. Residue Gln61 participates in (R)-pantoate binding. Beta-alanine is bound at residue Gln61. 147–150 (GRKD) serves as a coordination point for ATP. Position 153 (Gln153) interacts with (R)-pantoate. Residues Val176 and 184 to 187 (MSSR) contribute to the ATP site.

This sequence belongs to the pantothenate synthetase family. In terms of assembly, homodimer.

Its subcellular location is the cytoplasm. It catalyses the reaction (R)-pantoate + beta-alanine + ATP = (R)-pantothenate + AMP + diphosphate + H(+). It functions in the pathway cofactor biosynthesis; (R)-pantothenate biosynthesis; (R)-pantothenate from (R)-pantoate and beta-alanine: step 1/1. Its function is as follows. Catalyzes the condensation of pantoate with beta-alanine in an ATP-dependent reaction via a pantoyl-adenylate intermediate. The polypeptide is Pantothenate synthetase (Pelobacter propionicus (strain DSM 2379 / NBRC 103807 / OttBd1)).